A 271-amino-acid chain; its full sequence is Mannosyl-3-phosphoglycerate phosphatase (271 aa).

The active-site Nucleophile is the Asp-13. Mg(2+) is bound by residues Asp-13, Asp-15, and Asp-214.

The protein belongs to the HAD-like hydrolase superfamily. MPGP family. Mg(2+) is required as a cofactor.

It localises to the cytoplasm. The catalysed reaction is 2-O-(alpha-D-mannosyl)-3-phosphoglycerate + H2O = (2R)-2-O-(alpha-D-mannosyl)-glycerate + phosphate. This Shigella dysenteriae serotype 1 (strain Sd197) protein is Mannosyl-3-phosphoglycerate phosphatase (yedP).